The chain runs to 33 residues: Brevinin-2HSb (33 aa).

Cysteine 27 and cysteine 33 form a disulfide bridge.

In terms of tissue distribution, expressed by the skin glands.

It localises to the secreted. Functionally, has antibacterial activity against the Gram-positive bacterium S.aureus ATCC 25923 and the Gram-negative bacterium E.coli ATCC 25726. This is Brevinin-2HSb from Odorrana hosii (Hose's rock frog).